The chain runs to 615 residues: Hypermethylated in cancer 2 protein (615 aa).

Residues 46–109 form the BTB domain; sequence CDVIIMVENS…IYTGKLLPSD (64 aa). The disordered stretch occupies residues 144 to 167; the sequence is KPFGSGRAGSTGMGRPPRSQRLST. 3 positions are modified to phosphoserine: serine 166, serine 169, and serine 197. Disordered stretches follow at residues 182–208 and 229–421; these read RKGA…GSNQ and GCSS…SGHA. A binding to CtBP region spans residues 246-250; it reads GLDLS. Residues 280-296 are compositionally biased toward low complexity; the sequence is SPPAASAPPVANSASYS. The segment covering 336 to 356 has biased composition (basic and acidic residues); the sequence is KKEWGKKEPVAGSPFERREAG. Serine 348 carries the post-translational modification Phosphoserine. The span at 379–388 shows a compositional bias: low complexity; sequence ASGAGPSGPY. Serine 412 is modified (phosphoserine). 5 consecutive C2H2-type zinc fingers follow at residues 442–469, 505–532, 533–560, 561–588, and 589–615; these read YVCI…EEEL, FKCS…LTRP, FPCN…GLKP, FACD…GEKP, and YECQ…TSPS.

It belongs to the krueppel C2H2-type zinc-finger protein family. Hic subfamily. As to quaternary structure, self-associates. Interacts with HIC1. As to expression, highest levels in cerebellum.

It localises to the nucleus. In terms of biological role, transcriptional repressor. This Homo sapiens (Human) protein is Hypermethylated in cancer 2 protein (HIC2).